A 20-amino-acid chain; its full sequence is M-poneritoxin-Ng1f (20 aa).

The residue at position 20 (lysine 20) is a Lysine amide.

As to expression, expressed by the venom gland.

It localises to the secreted. It is found in the target cell membrane. Functionally, has activity against Gram-positive bacteria. Has insecticidal and hemolytic activities. May act by disrupting the integrity of the bacterial cell membrane. The protein is M-poneritoxin-Ng1f of Neoponera goeldii (Ponerine ant).